Consider the following 402-residue polypeptide: Zinc finger CCHC domain-containing protein 12 (402 aa).

The segment at M1–P20 is disordered. Residues I346 to N363 form a CCHC-type zinc finger. The disordered stretch occupies residues H383–Q402.

It belongs to the ZCCHC12 family. Interacts with SMAD1 and CREB-binding protein (CBP). Forms a protein-DNA complex through its association with SMAD1. In embryonic brains expression is restricted to the ventral region of the forebrain, including the septum, amygdala, caudal putamen, and in the basal-forebrain cholinergic neurons. In adults, expressed in the brain, and at low levels in the testis.

Functionally, transcriptional coactivator in the bone morphogenetic protein (BMP)-signaling pathway. It positively modulates BMP signaling by interacting with SMAD1 and associating with CBP in the transcription complex. It contributes to the BMP-induced enhancement of cholinergic-neuron-specific gene expression. This chain is Zinc finger CCHC domain-containing protein 12 (Zcchc12), found in Mus musculus (Mouse).